Consider the following 173-residue polypeptide: Crossover junction endodeoxyribonuclease RuvC (173 aa).

Active-site residues include aspartate 8, glutamate 67, and aspartate 139. Residues aspartate 8, glutamate 67, and aspartate 139 each contribute to the Mg(2+) site.

It belongs to the RuvC family. In terms of assembly, homodimer which binds Holliday junction (HJ) DNA. The HJ becomes 2-fold symmetrical on binding to RuvC with unstacked arms; it has a different conformation from HJ DNA in complex with RuvA. In the full resolvosome a probable DNA-RuvA(4)-RuvB(12)-RuvC(2) complex forms which resolves the HJ. Requires Mg(2+) as cofactor.

It localises to the cytoplasm. It carries out the reaction Endonucleolytic cleavage at a junction such as a reciprocal single-stranded crossover between two homologous DNA duplexes (Holliday junction).. The RuvA-RuvB-RuvC complex processes Holliday junction (HJ) DNA during genetic recombination and DNA repair. Endonuclease that resolves HJ intermediates. Cleaves cruciform DNA by making single-stranded nicks across the HJ at symmetrical positions within the homologous arms, yielding a 5'-phosphate and a 3'-hydroxyl group; requires a central core of homology in the junction. The consensus cleavage sequence is 5'-(A/T)TT(C/G)-3'. Cleavage occurs on the 3'-side of the TT dinucleotide at the point of strand exchange. HJ branch migration catalyzed by RuvA-RuvB allows RuvC to scan DNA until it finds its consensus sequence, where it cleaves and resolves the cruciform DNA. The protein is Crossover junction endodeoxyribonuclease RuvC of Cronobacter sakazakii (strain ATCC BAA-894) (Enterobacter sakazakii).